A 174-amino-acid polypeptide reads, in one-letter code: Gamma-crystallin E (174 aa).

Beta/gamma crystallin 'Greek key' domains are found at residues 2–40 (GKIT…RVDS) and 41–83 (GCWM…RLIP). Residues 84 to 87 (HSSS) form a connecting peptide region. Beta/gamma crystallin 'Greek key' domains follow at residues 88-128 (HRIR…HVME) and 129-171 (GYWV…RRIM).

The protein belongs to the beta/gamma-crystallin family. As to expression, detected in the superior olivary complex and fibers of the ventral aoustic stria of the auditory hindbrain.

Crystallins are the dominant structural components of the vertebrate eye lens. This is Gamma-crystallin E (Cryge) from Rattus norvegicus (Rat).